The sequence spans 485 residues: MLERLKAPWSAALQRKYFDLGIWTAPISPMALTMLNGLLIKDSSPPMLLHQVNKTAQLDTFNYQSCFMQSVFDHFPEILFIHRTYNPRGKVLYTFLVDGPRVQLEGHLARAVYFAIPAKEDTEGLAQMFQVFKKFNPAWERVCTILVDPHFLPLPILAMEFPTAEVLLSAFHICKFLQAKFYQLSLERPVERLLLTSLQSTMCSATAGNLRKLYTLLSNCIPPAKLPELHSHWLLNDRIWLAHRWRSRAESSHYFQSLEVTTHILSQFFGTTPSEKQGMASLFRYMQQNSADKANFNQGLCAQNNHAPSDTIPESPKLEQLVESHIQHSLNAICTGPAAQLCLGELAVVQKSTHLIGSGSEKMNIQILEDTHKVQPQPPASCSCYFNQAFHLPCRHILAMLSARRQVLQPDMLPAQWTAGCATSLDSILGSKWSETLDKHLAVTHLTEEVGQLLQHCTKEEFERRYSTLRELADSWIGPYEQVQL.

An SWIM-type zinc finger spans residues 363–405 (MNIQILEDTHKVQPQPPASCSCYFNQAFHLPCRHILAMLSARR).

The protein is Zinc finger SWIM domain-containing protein 1 (ZSWIM1) of Homo sapiens (Human).